Here is a 270-residue protein sequence, read N- to C-terminus: Probable thioesterase BOA10 (270 aa).

Belongs to the AMT4 thioesterase family.

It participates in polyketide biosynthesis. Its function is as follows. Probable thioesterase; part of the gene cluster B that mediates the biosynthesis of botcinic acid and its botcinin derivatives, acetate-derived polyketides that contribute to virulence when combined with the sesquiterpene botrydial. Botcinic acid and its derivatives have been shown to induce chlorosis and necrosis during host plant infection, but also have antifungal activities. Two polyketide synthases, BOA6 and BOA9, are involved in the biosynthesis of botcinins. BOA6 mediates the formation of the per-methylated tetraketide core by condensation of four units of malonyl-CoA with one unit of acetyl-CoA, which would be methylated in activated methylene groups to yield a bicyclic acid intermediate that could then either be converted to botrylactone derivatives or lose the starter acetate unit through a retro-Claisen type C-C bond cleavage to yield botcinin derivatives. The second polyketide synthase, BOA9, is probably required for the biosynthesis of the tetraketide side chain of botcinins. The methyltransferase (MT) domain within BOA6 is probably responsible for the incorporation of four methyl groups. The trans-enoyl reductase BOA5 might take over the enoyl reductase function of BOA6 that misses an ER domain. The monooxygenases BOA2, BOA3 and BOA4 might be involved in further hydroxylations at C4, C5 and C8, whereas BOA7, close to BOA9, could potentially be involved in the hydroxylation at C4 in the side chain of botcinins. This Botryotinia fuckeliana (strain B05.10) (Noble rot fungus) protein is Probable thioesterase BOA10.